Reading from the N-terminus, the 185-residue chain is Ribosome-recycling factor (185 aa).

Belongs to the RRF family.

Its subcellular location is the cytoplasm. Its function is as follows. Responsible for the release of ribosomes from messenger RNA at the termination of protein biosynthesis. May increase the efficiency of translation by recycling ribosomes from one round of translation to another. This Haemophilus influenzae (strain ATCC 51907 / DSM 11121 / KW20 / Rd) protein is Ribosome-recycling factor.